The following is a 646-amino-acid chain: Alkyl/aryl-sulfatase BDS1 (646 aa).

M1 carries the post-translational modification N-acetylmethionine. 7 residues coordinate Zn(2+): H162, H164, D166, H167, E273, E292, and H337.

Belongs to the metallo-beta-lactamase superfamily. Type III sulfatase family. It depends on Zn(2+) as a cofactor.

Its function is as follows. Alkyl/aryl-sulfatase. Enables the use of SDS and 4-nitrocatechol as sulfur source. The chain is Alkyl/aryl-sulfatase BDS1 (BDS1) from Saccharomyces cerevisiae (strain ATCC 204508 / S288c) (Baker's yeast).